The primary structure comprises 320 residues: Malate dehydrogenase (320 aa).

NAD(+) contacts are provided by residues 10 to 15 and aspartate 34; that span reads GSGMIG. 2 residues coordinate substrate: arginine 83 and arginine 89. NAD(+)-binding positions include asparagine 96 and 119-121; that span reads ITN. 2 residues coordinate substrate: asparagine 121 and arginine 152. The Proton acceptor role is filled by histidine 176.

This sequence belongs to the LDH/MDH superfamily. MDH type 3 family.

It catalyses the reaction (S)-malate + NAD(+) = oxaloacetate + NADH + H(+). In terms of biological role, catalyzes the reversible oxidation of malate to oxaloacetate. The protein is Malate dehydrogenase of Hyphomonas neptunium (strain ATCC 15444).